A 452-amino-acid chain; its full sequence is MNRQLVNILTALFAFFLETNHFRTAFCKDHDSRSGKQPSQTLSPSDFLDKLMGRTSGYDARIRPNFKGPPVNVTCNIFINSFGSVTETTMDYRVNIFLRQQWNDSRLAYSEYPDDSLDLDPSMLDSIWKPDLFFANEKGANFHDVTTDNKLLRISKNGKVLYSIRLTLTLSCPMDLKNFPMDVQTCTMQLESFGYTMNDLIFEWLSDGPVQVAEGLTLPQFILKEEKELGYCTKHYNTGKFTCIEVKFHLERQMGYYLIQMYIPSLLIVILSWVSFWINMDAAPARVALGITTVLTMTTQSSGSRASLPKVSYVKAIDIWMAVCLLFVFAALLEYAAVNFVSRQHKEFLRLRRRQKRQNKEEDVTRESRFNFSGYGMGHCLQVKDGTAVKATPANPLPQPPKDGDAIKKKFVDRAKRIDTISRAAFPLAFLIFNIFYWITYKIIRHEDVHKK.

The signal sequence occupies residues 1 to 27; that stretch reads MNRQLVNILTALFAFFLETNHFRTAFC. Over 28 to 256 the chain is Extracellular; it reads KDHDSRSGKQ…KFHLERQMGY (229 aa). Asn72 carries an N-linked (GlcNAc...) asparagine glycan. Arg99 contacts glycine. Position 99 (Arg99) interacts with strychnine. N-linked (GlcNAc...) asparagine glycosylation is present at Asn103. A glycine-binding site is contributed by Ser163. An intrachain disulfide couples Cys172 to Cys186. Zn(2+) contacts are provided by Glu226 and Glu228. Cysteines 232 and 243 form a disulfide. Residue Thr238 coordinates glycine. His249 contacts Zn(2+). Residues 257 to 278 traverse the membrane as a helical segment; sequence YLIQMYIPSLLIVILSWVSFWI. Residues 279 to 283 lie on the Cytoplasmic side of the membrane; it reads NMDAA. The helical transmembrane segment at 284–304 threads the bilayer; sequence PARVALGITTVLTMTTQSSGS. Residues 305–315 lie on the Extracellular side of the membrane; the sequence is RASLPKVSYVK. Residues 316 to 336 traverse the membrane as a helical segment; the sequence is AIDIWMAVCLLFVFAALLEYA. Over 337–420 the chain is Cytoplasmic; that stretch reads AVNFVSRQHK…FVDRAKRIDT (84 aa). A helical transmembrane segment spans residues 421–441; it reads ISRAAFPLAFLIFNIFYWITY. Residues 442-452 lie on the Extracellular side of the membrane; it reads KIIRHEDVHKK.

The protein belongs to the ligand-gated ion channel (TC 1.A.9) family. Glycine receptor (TC 1.A.9.3) subfamily. GLRA2 sub-subfamily. As to quaternary structure, interacts with GLRB. Heteropentamer composed of GLRA2 and GLRB. Functional GLRB-GLRA2 heteropentamers contain four GLRA2 subunits and one GLRB subunit, although alternative subunit composition cannot be excluded. Homopentamer (in vitro). Both homopentamers and heteropentamers form functional ion channels, but their characteristics are subtly different.

Its subcellular location is the postsynaptic cell membrane. It localises to the synapse. It is found in the cell membrane. The protein localises to the cell projection. The catalysed reaction is chloride(in) = chloride(out). With respect to regulation, channel opening is triggered by extracellular glycine. Channel opening is also triggered by taurine and beta-alanine. Inhibited by strychnine. Inhibited by picrotoxin. Channel activity is potentiated by 10-100 uM Zn(2+). Channel activity is marginally increased by 50 mM ethanol; it is strongly increased by a combination of 0.5 uM Zn(2+) and 50 mM ethanol. Channel activity is inhibited by 100-1000 uM Zn(2+). Its function is as follows. Subunit of heteromeric glycine-gated chloride channels. Plays a role in synaptic plasticity. Contributes to the generation of inhibitory postsynaptic currents, and is involved in the down-regulation of neuronal excitability. Plays a role in cellular responses to ethanol. The sequence is that of Glycine receptor subunit alpha-2 from Homo sapiens (Human).